A 369-amino-acid polypeptide reads, in one-letter code: Delta(6)-protoilludene synthase STEHIDRAFT_73029 (369 aa).

Mg(2+)-binding residues include Asp-107, Asn-243, Ser-247, and Glu-251. The short motif at 107 to 111 (DEYSD) is the D(D/E)XX(D/E) motif element. Residues 243 to 251 (NDIVSYNLE) carry the NSE motif motif. 2 residues coordinate (2E,6E)-farnesyl diphosphate: Arg-333 and Tyr-334.

This sequence belongs to the terpene synthase family. Mg(2+) serves as cofactor. The cofactor is Mn(2+). Ca(2+) is required as a cofactor. Requires Ni(2+) as cofactor. It depends on Co(2+) as a cofactor.

It catalyses the reaction (2E,6E)-farnesyl diphosphate = Delta(6)-protoilludene + diphosphate. It carries out the reaction (2E,6E)-farnesyl diphosphate = alpha-selinene + diphosphate. Ca(2+) switches the cyclization mechanism of delta(6)-protoilludene synthase from 1,11 to 1,10 cyclization which leads to the production of beta-elemene. Terpene cyclase that catalyzes the cyclization of farnesyl diphosphate (FPP) to delta(6)-protoilludene. In presence of Ca(2+), a significant switch from 1,11 to a dual 1,11/1,10 cyclization occurs, producing beta-elemene as the major product, with lower levels of delta(6)-protoilludene and (E)-beta-caryophyllene, and traces of beta-selinene and alpha-selinene. In Stereum hirsutum (strain FP-91666) (White-rot fungus), this protein is Delta(6)-protoilludene synthase STEHIDRAFT_73029.